A 237-amino-acid polypeptide reads, in one-letter code: Mitochondrial carrier-like protein L276 (237 aa).

Solcar repeat units follow at residues 1–83 (MAKY…FENK), 85–161 (YPYT…LNEY), and 164–233 (KPVV…LNKK). The next 5 membrane-spanning stretches (helical) occupy residues 11–27 (AIATIVAEIITLPICTF), 60–76 (VPAIMSQTYSTSSKYFL), 91–108 (MINGIISGIMTSLITHPI), 140–160 (SFGKTVISSSMFFPLYETLNE), and 166–183 (VVSSMLTAIISTTIMQPL). The Substrate recognition signature appears at 191–196 (IYGLSL). A helical transmembrane segment spans residues 205–226 (YYRGLSLNLMRIVPHFVITMTT).

Belongs to the mitochondrial carrier (TC 2.A.29) family.

It is found in the host mitochondrion inner membrane. Transports dATP and to a lesser extent dTTP, TTP, UTP and ADP, possibly across the mitochondrial inner membrane. The protein is Mitochondrial carrier-like protein L276 of Acanthamoeba polyphaga (Amoeba).